We begin with the raw amino-acid sequence, 694 residues long: GRB2-associated-binding protein 1 (694 aa).

At serine 2 the chain carries N-acetylserine. Residues glutamate 5 to glycine 116 form the PH domain. The segment covering proline 194–serine 203 has biased composition (basic and acidic residues). A disordered region spans residues proline 194–glycine 231. Polar residues predominate over residues alanine 204–histidine 230. 4 positions are modified to phosphoserine: serine 251, serine 253, serine 266, and serine 304. The interval isoleucine 309–alanine 378 is disordered. Positions aspartate 358–cysteine 374 are enriched in polar residues. Phosphothreonine is present on threonine 387. Serine 402 and serine 454 each carry phosphoserine. Disordered stretches follow at residues proline 492 to alanine 532 and aspartate 560 to arginine 656. Over residues proline 594–glycine 611 the composition is skewed to polar residues. Tyrosine 627 is modified (phosphotyrosine). A Phosphothreonine modification is found at threonine 638. At serine 651 the chain carries Phosphoserine. Tyrosine 659 is subject to Phosphotyrosine. Residues leucine 668–lysine 694 form a disordered region. Residues serine 672 to threonine 684 show a composition bias toward basic and acidic residues. Position 683 is a phosphoserine (serine 683). Polar residues predominate over residues glutamate 685–lysine 694.

The protein belongs to the GAB family. As to quaternary structure, identified in a complex containing FRS2, GRB2, GAB1, PIK3R1 and SOS1. Forms a tripartite complex containing GAB1, METTL13 and SPRY2. Within the complex interacts with METTL13. Interacts with GRB2 and with other SH2-containing proteins. Interacts with phosphorylated LAT2. Interacts with PTPRJ. Interacts (phosphorylated) with PTPN11. Interacts with HCK. In terms of processing, phosphorylated in response to FGFR1 activation. Phosphorylated on tyrosine residue(s) by the epidermal growth factor receptor (EGFR) and the insulin receptor (INSR). Tyrosine phosphorylation of GAB1 mediates interaction with several proteins that contain SH2 domains. Phosphorylated on tyrosine residues by HCK upon IL6 signaling.

Adapter protein that plays a role in intracellular signaling cascades triggered by activated receptor-type kinases. Plays a role in FGFR1 signaling. Probably involved in signaling by the epidermal growth factor receptor (EGFR) and the insulin receptor (INSR). Involved in the MET/HGF-signaling pathway. The polypeptide is GRB2-associated-binding protein 1 (GAB1) (Bos taurus (Bovine)).